The primary structure comprises 386 residues: Methylthioribose-1-phosphate isomerase (386 aa).

Catalysis depends on aspartate 258, which acts as the Proton donor.

It belongs to the eIF-2B alpha/beta/delta subunits family. MtnA subfamily.

It localises to the cytoplasm. The protein resides in the nucleus. It carries out the reaction 5-(methylsulfanyl)-alpha-D-ribose 1-phosphate = 5-(methylsulfanyl)-D-ribulose 1-phosphate. It functions in the pathway amino-acid biosynthesis; L-methionine biosynthesis via salvage pathway; L-methionine from S-methyl-5-thio-alpha-D-ribose 1-phosphate: step 1/6. Its function is as follows. Catalyzes the interconversion of methylthioribose-1-phosphate (MTR-1-P) into methylthioribulose-1-phosphate (MTRu-1-P). The polypeptide is Methylthioribose-1-phosphate isomerase (Postia placenta (strain ATCC 44394 / Madison 698-R) (Brown rot fungus)).